Reading from the N-terminus, the 436-residue chain is Sulfopropanediol 3-dehydrogenase (436 aa).

NAD(+) contacts are provided by Tyr118, Gln180, and Asn203. 2 residues coordinate Zn(2+): Gln248 and His251. Catalysis depends on proton acceptor residues Glu318 and His319. 2 residues coordinate Zn(2+): Asp352 and His411.

The protein belongs to the histidinol dehydrogenase family. HpsN subfamily. Zn(2+) is required as a cofactor.

It carries out the reaction (2R)-3-sulfopropanediol + 2 NAD(+) + H2O = (2R)-3-sulfolactate + 2 NADH + 3 H(+). Its function is as follows. Catalyzes the NAD-dependent oxidation of (R)-2,3-dihydroxypropane-1-sulfonate to (R)-3-sulfolactate. In Cupriavidus pinatubonensis (strain JMP 134 / LMG 1197) (Cupriavidus necator (strain JMP 134)), this protein is Sulfopropanediol 3-dehydrogenase.